The primary structure comprises 122 residues: Large ribosomal subunit protein uL14 (122 aa).

The protein belongs to the universal ribosomal protein uL14 family. In terms of assembly, part of the 50S ribosomal subunit. Forms a cluster with proteins L3 and L19. In the 70S ribosome, L14 and L19 interact and together make contacts with the 16S rRNA in bridges B5 and B8.

Binds to 23S rRNA. Forms part of two intersubunit bridges in the 70S ribosome. The chain is Large ribosomal subunit protein uL14 from Laribacter hongkongensis (strain HLHK9).